A 143-amino-acid chain; its full sequence is uncharacterized protein (143 aa).

In terms of domain architecture, HTH marR-type spans 5 to 137 (DARLASDLSL…LRNAADLILE (133 aa)). Positions 51–74 (PGALAIRERVRPPSMTRVIASLAD) form a DNA-binding region, H-T-H motif.

In terms of assembly, homodimer.

This is an uncharacterized protein from Mycobacterium leprae (strain TN).